A 314-amino-acid polypeptide reads, in one-letter code: Vacuolar membrane protein VL3_4134 (314 aa).

A disordered region spans residues 32 to 60; that stretch reads KPTSSVVSETSSKSLPSLTSSAFSTSSGA. A helical membrane pass occupies residues 93–113; sequence VYIAVGAVIGAIFISILIWWL. 3 positions are modified to phosphoserine: Ser-148, Ser-254, and Ser-274. Residues 240–309 form a disordered region; sequence EERKLNLNRP…PSMFLDDVLN (70 aa). Over residues 254-269 the composition is skewed to basic and acidic residues; the sequence is SPERKEKKINSMEGYH.

Belongs to the PRM5 family.

It is found in the vacuole membrane. The sequence is that of Vacuolar membrane protein VL3_4134 from Saccharomyces cerevisiae (strain Zymaflore VL3) (Baker's yeast).